Here is a 945-residue protein sequence, read N- to C-terminus: MSRITCPITDCKCKCNKNNCVYCVMGRQGLPGPKGSSGNSIYVGTGVPSPFLGNNGDLYIDSSTGLLYAKVNGVWVPQGSLKGDPGASGSKGEKGDKGSSGEAGLKGEQGTKGEQGDQGEQGDKGDKGDKGDVGAKGDQGDKGDQGDVGAKGDQGDKGDQGDVGAKGDQGDKGDKGDQGDKGDVGDPGVKGDKGDTGDKGDKGDKGDKGQNGSEILFGLGIPSPDLGEDGDVYIDTLTGNVYQKIGGVWVLETNIKGEKGDQGDKGDTGSKGDQGDKGDQGDKGDQGDKGDVGDKGNKGDTGSKGDVGDKGDVGDKGDKGDTGDKGDKGDTGDKGDKGDVGDKGDKGDVGDKGDVGDKGDVGDKGDKGDTGDKGDKGDIGDKGDKGDIGDKGDKGDIGDKGDKGDVGDKGDKGDKGDIGDKGDKGDIGDKGDKGDKGDKGENGSGILFGLGIPSPDLGEDGDIYIDTLTGNVYQKIGGVWVLETSIKGEKGDKGDTGDKGDTGDKGDTGDKGDTGDKGDTGDKGDVGDKGDVGDKGDVGDKGDVGDKGDKGDIGDKGDKGDLGDKGDKGDVGDKGDVGDKGDKGDIGDKGDKGDLGDKGDKGDVGDKGDKGDVGDKGDKGDIGDKGDKGDVGDKGDKGDIGDKGDKGDKGDVGSKGDKGDKGDVGDKGDKGDVGSKGDKGDKGDKGDVGPVGASILFGAGVPSPTTGENGDSYIDNSTGVFYLKINDVWVPQTNIKGDKGDKGDKGDKGDKGDTGDVGLKGDTGTPGSGPIIPYSSGLTPVALAVVAVAGGGIADTGASYDFGVSSPSVTLVGVNLDFTGPVQGLLPNMAWSAPRDTVITSLATAFQVSVAISAVLEPIFLRTQVYRELAANPGVFEPLAGAIVEFDVASSALISVGTVFRGIVTGLSIPVNAGDRLIVFANTRTTSLISVGTVTGFISSGLALA.

2 disordered regions span residues 80-226 (SLKG…SPDL) and 257-441 (GEKG…DKGE). Collagen-like domains are found at residues 83–142 (GDPG…QGDK) and 146–205 (GDVG…KGDK). Basic and acidic residues-rich tracts occupy residues 109–145 (QGTKGEQGDQGEQGDKGDKGDKGDVGAKGDQGDKGDQ) and 168–208 (DQGD…KGDK). Residue Asn-211 is glycosylated (N-linked (GlcNAc...) asparagine; by host). 5 Collagen-like domains span residues 257-376 (GEKG…KGDK), 383-442 (GDKG…KGEN), 488-547 (GEKG…VGDK), 554-613 (GDKG…KGDV), and 635-694 (GDKG…VGAS). Asn-442 is a glycosylation site (N-linked (GlcNAc...) asparagine; by host). Over residues 488–687 (GEKGDKGDTG…DKGDKGDKGD (200 aa)) the composition is skewed to basic and acidic residues. The tract at residues 488-712 (GEKGDKGDTG…SPTTGENGDS (225 aa)) is disordered. Positions 703–712 (SPTTGENGDS) are enriched in polar residues. N-linked (GlcNAc...) asparagine; by host glycosylation is present at Asn-716. The interval 733-768 (TNIKGDKGDKGDKGDKGDKGDTGDVGLKGDTGTPGS) is disordered. Basic and acidic residues predominate over residues 736–754 (KGDKGDKGDKGDKGDKGDT). Positions 756–765 (DVGLKGDTGT) are enriched in low complexity.

May be hydroxylated on lysine by the viral-encoded procollagen-lysine,2-oxoglutarate 5-dioxygenase.

It localises to the virion. In terms of biological role, may participate in the formation of a layer of cross-linked glycosylated fibrils at the viral surface thus giving it a hairy-like appearance. The sequence is that of Collagen-like protein 1 from Acanthamoeba polyphaga mimivirus (APMV).